The chain runs to 727 residues: Catalase-peroxidase (727 aa).

A disordered region spans residues 1-24 (MDQKSDSAGKCPVAHTAPRGRSNR). Residues 95–217 (WHSAGTYRIT…LAAVQMGLIY (123 aa)) constitute a cross-link (tryptophyl-tyrosyl-methioninium (Trp-Tyr) (with M-243)). The active-site Proton acceptor is His96. Residues 217–243 (YVNPEGPNGNPDPVAAARDIRETFARM) constitute a cross-link (tryptophyl-tyrosyl-methioninium (Tyr-Met) (with W-95)). Heme b is bound at residue His258.

This sequence belongs to the peroxidase family. Peroxidase/catalase subfamily. As to quaternary structure, homodimer or homotetramer. It depends on heme b as a cofactor. In terms of processing, formation of the three residue Trp-Tyr-Met cross-link is important for the catalase, but not the peroxidase activity of the enzyme.

The enzyme catalyses H2O2 + AH2 = A + 2 H2O. It catalyses the reaction 2 H2O2 = O2 + 2 H2O. Bifunctional enzyme with both catalase and broad-spectrum peroxidase activity. The protein is Catalase-peroxidase of Rhizobium meliloti (strain 1021) (Ensifer meliloti).